A 472-amino-acid polypeptide reads, in one-letter code: Glutamate--tRNA ligase (472 aa).

Positions 10–20 (PSPTGYLHVGG) match the 'HIGH' region motif. Cys-99, Cys-101, Cys-126, and His-128 together coordinate Zn(2+). A 'KMSKS' region motif is present at residues 238–242 (KLSKR). Residue Lys-241 participates in ATP binding.

Belongs to the class-I aminoacyl-tRNA synthetase family. Glutamate--tRNA ligase type 1 subfamily. In terms of assembly, monomer. The cofactor is Zn(2+).

The protein localises to the cytoplasm. It carries out the reaction tRNA(Glu) + L-glutamate + ATP = L-glutamyl-tRNA(Glu) + AMP + diphosphate. Catalyzes the attachment of glutamate to tRNA(Glu) in a two-step reaction: glutamate is first activated by ATP to form Glu-AMP and then transferred to the acceptor end of tRNA(Glu). The chain is Glutamate--tRNA ligase from Proteus mirabilis (strain HI4320).